Reading from the N-terminus, the 163-residue chain is Phosphopantetheine adenylyltransferase (163 aa).

S11 provides a ligand contact to substrate. Residues 11–12 and H19 each bind ATP; that span reads SF. The substrate site is built by K43, A76, and R90. ATP contacts are provided by residues 91-93, E101, and 126-132; these read GLR and WQALSSS.

It belongs to the bacterial CoaD family. Homohexamer. Mg(2+) is required as a cofactor.

The protein localises to the cytoplasm. The enzyme catalyses (R)-4'-phosphopantetheine + ATP + H(+) = 3'-dephospho-CoA + diphosphate. Its pathway is cofactor biosynthesis; coenzyme A biosynthesis; CoA from (R)-pantothenate: step 4/5. Functionally, reversibly transfers an adenylyl group from ATP to 4'-phosphopantetheine, yielding dephospho-CoA (dPCoA) and pyrophosphate. The sequence is that of Phosphopantetheine adenylyltransferase from Streptococcus pyogenes serotype M2 (strain MGAS10270).